We begin with the raw amino-acid sequence, 361 residues long: Ribosomal RNA large subunit methyltransferase M (361 aa).

S-adenosyl-L-methionine is bound by residues Ser-193, 226–229 (CPGG), Asp-245, Asp-265, and Asp-283. Lys-312 (proton acceptor) is an active-site residue.

The protein belongs to the class I-like SAM-binding methyltransferase superfamily. RNA methyltransferase RlmE family. RlmM subfamily. As to quaternary structure, monomer.

The protein localises to the cytoplasm. It carries out the reaction cytidine(2498) in 23S rRNA + S-adenosyl-L-methionine = 2'-O-methylcytidine(2498) in 23S rRNA + S-adenosyl-L-homocysteine + H(+). Functionally, catalyzes the 2'-O-methylation at nucleotide C2498 in 23S rRNA. The sequence is that of Ribosomal RNA large subunit methyltransferase M from Histophilus somni (strain 129Pt) (Haemophilus somnus).